The sequence spans 329 residues: Calponin-3 (329 aa).

K23 bears the N6-acetyllysine mark. The Calponin-homology (CH) domain occupies 26–130; that stretch reads HQAEEDLRNW…TLVALAGLAK (105 aa). K158 is subject to N6-methyllysine. Calponin-like repeat units follow at residues 164–189, 204–229, and 243–268; these read IGLQMGTNKCASQAGMTAYGTRRHLY, ISLQMGTNKGASQAGMLAPGTRRDIY, and ISLQMGTNKVASQKGMSVYGLGRQVY. The segment at 280–329 is disordered; it reads VIHNGSQGTGTNGSEISDSDYQAEYPDEYHGEYQDDYPRDYQYGDQGIDY. The segment covering 306–318 has biased composition (basic and acidic residues); sequence DEYHGEYQDDYPR.

This sequence belongs to the calponin family.

Its function is as follows. Thin filament-associated protein that is implicated in the regulation and modulation of smooth muscle contraction. It is capable of binding to actin, calmodulin and tropomyosin. The interaction of calponin with actin inhibits the actomyosin Mg-ATPase activity. The protein is Calponin-3 (CNN3) of Bos taurus (Bovine).